A 342-amino-acid chain; its full sequence is Phenylalanine--tRNA ligase alpha subunit (342 aa).

E260 contacts Mg(2+).

The protein belongs to the class-II aminoacyl-tRNA synthetase family. Phe-tRNA synthetase alpha subunit type 1 subfamily. In terms of assembly, tetramer of two alpha and two beta subunits. Requires Mg(2+) as cofactor.

It is found in the cytoplasm. It carries out the reaction tRNA(Phe) + L-phenylalanine + ATP = L-phenylalanyl-tRNA(Phe) + AMP + diphosphate + H(+). This is Phenylalanine--tRNA ligase alpha subunit from Mycobacterium avium (strain 104).